Reading from the N-terminus, the 349-residue chain is 3'-5' exoribonuclease 1 (349 aa).

2 stretches are compositionally biased toward basic and acidic residues: residues 1-10 and 22-35; these read MEDPQSKEPA and PRPE…RPSP. Residues 1–48 form a disordered region; sequence MEDPQSKEPAGEAVALALLESPRPEGGEEPPRPSPEETQQCKFDGQET. 2 positions are modified to phosphoserine: serine 59 and serine 62. Residues 76–110 form the SAP domain; sequence INRMSKEELRAKLSEFKLETRGVKDVLKKRLKNYY. The Exonuclease domain maps to 130-306; sequence ICIIDFEATC…DDSKNIARIA (177 aa). Residues aspartate 134 and glutamate 136 each contribute to the Mg(2+) site. Catalysis depends on glutamate 136, which acts as the Proton acceptor. Positions 136 and 137 each coordinate AMP. A Mg(2+)-binding site is contributed by aspartate 234. Histidine 293 functions as the Proton acceptor in the catalytic mechanism. Histidine 293 is a binding site for AMP. Mg(2+) is bound at residue aspartate 298.

As to quaternary structure, identified in a histone pre-mRNA complex, at least composed of ERI1, LSM11, SLBP, SNRPB, SYNCRIP and YBX1. Interacts in a cooperative manner with SLBP to the mature 3'-end of histone mRNAs. Binds to 40S and 60S ribosomal subunits and to 80S assembled ribosomes. Found in a ternary complex with SLBP and the stem-loop structure of the 3'-end of histone mRNAs. Mg(2+) is required as a cofactor.

The protein localises to the cytoplasm. It localises to the nucleus. Its subcellular location is the nucleolus. The catalysed reaction is Exonucleolytic cleavage in the 3'- to 5'-direction to yield nucleoside 5'-phosphates.. Although it can bind simultaneously with SLBP to the 3'-end of histone mRNA, the presence of SLBP prevents the exonuclease activity. In terms of biological role, RNA exonuclease that binds to the 3'-end of histone mRNAs and degrades them, suggesting that it plays an essential role in histone mRNA decay after replication. A 2' and 3'-hydroxyl groups at the last nucleotide of the histone 3'-end is required for efficient 3'-end histone mRNA exonuclease activity and degradation of RNA substrates. Also able to degrade the 3'-overhangs of short interfering RNAs (siRNAs) in vitro, suggesting a possible role as regulator of RNA interference (RNAi). Required for binding the 5'-ACCCA-3' sequence present in stem-loop structure. Able to bind other mRNAs. Required for 5.8S rRNA 3'-end processing. Also binds to 5.8s ribosomal RNA. Binds with high affinity to the stem-loop structure of replication-dependent histone pre-mRNAs. In vitro, does not have sequence specificity. In vitro, has weak DNA exonuclease activity. In vitro, shows biphasic kinetics such that there is rapid hydrolysis of the last three unpaired RNA nucleotides in the 39 flanking sequence followed by a much slower cleavage through the stem that occurs over a longer incubation period in the order of hours. ERI1-mediated RNA metabolism plays a key role in chondrogenesis. This is 3'-5' exoribonuclease 1 from Homo sapiens (Human).